A 63-amino-acid polypeptide reads, in one-letter code: Protein CYSTEINE-RICH TRANSMEMBRANE MODULE 12 (63 aa).

Residues 1-34 form a disordered region; it reads MQDMRDQNPPQGYPAAEQVSEQPGQDKKKKKPRF. The helical transmembrane segment at 40–56 threads the bilayer; the sequence is KGDRGFIEGCLFALCCC.

This sequence belongs to the CYSTM1 family. In terms of assembly, homodimer and heterodimers. Binds weakly to CYSTM4, CYSTM6 and CYSTM7. As to expression, mostly expressed in roots, flowers and siliques and, to a lower extent, in stems and leaves.

It localises to the cell membrane. It is found in the cytoplasm. Functionally, involved in resistance to abiotic stress. The chain is Protein CYSTEINE-RICH TRANSMEMBRANE MODULE 12 from Arabidopsis thaliana (Mouse-ear cress).